Reading from the N-terminus, the 381-residue chain is MMFSGFNADYEASSFRCSSASPAGDSLSYYHSPADSFSSMGSPVNTQDFCADLSVSSANFIPTVTATSTSPDLQWLVQPTLVSSVAPSQTRAPHPYGLPTQSAGAYARAEMVKTVSGGRAQSIGRRGKVEQLSPEEEEKRRIRRERNKMAAAKCRNRRRELTDTLQAETDQLEDKKSALQTEIANLLKEKEKLEFILAAHRPACKIPDDLGFPEEMSVASLDLTGGLPEASTPESEEAFTLPLLNDPEPKPSLEPVKSISNVELKAEPFDDFLFPASSRPSGSETSRSVPNVDLSGSFYAADWEPLHSNSLGMGPMVTELEPLCTPVVTCTPLLRLPELTHAAGPVSSQRRQGSRHPDVPLPELVHYREEKHVFPQRFPST.

The region spanning 137 to 200 (EEKRRIRRER…EKLEFILAAH (64 aa)) is the bZIP domain. The interval 139 to 159 (KRRIRRERNKMAAAKCRNRRR) is basic motif. Residues 165–193 (LQAETDQLEDKKSALQTEIANLLKEKEKL) form a leucine-zipper region.

It belongs to the bZIP family. Fos subfamily.

Its subcellular location is the host nucleus. This chain is p55-v-Fos-transforming protein (V-FOS), found in Mus musculus (Mouse).